Reading from the N-terminus, the 592-residue chain is Arginine--tRNA ligase (592 aa).

The 'HIGH' region signature appears at 112-122 (VNPNKELHVGH).

Belongs to the class-I aminoacyl-tRNA synthetase family. In terms of assembly, monomer.

It localises to the cytoplasm. The catalysed reaction is tRNA(Arg) + L-arginine + ATP = L-arginyl-tRNA(Arg) + AMP + diphosphate. This chain is Arginine--tRNA ligase, found in Thermus thermophilus (strain ATCC 27634 / DSM 579 / HB8).